The chain runs to 451 residues: Molybdate-anion transporter (451 aa).

Helical transmembrane passes span 1-21, 45-65, 79-99, 130-150, 180-200, 201-221, 251-271, 281-301, 316-336, 346-366, 378-398, and 410-430; these read MLVT…VLEF, YDFY…GPYL, IAII…VSVP, FVLM…FSCF, NGGI…WLGL, GPAS…VLVI, VLLL…FIFL, APLG…SSLY, VLCL…FSTA, LLAF…MRFL, GVLN…LLVL, and MFSL…SLFT.

The protein belongs to the major facilitator superfamily.

It localises to the cell membrane. Mediates high-affinity intracellular uptake of the rare oligo-element molybdenum. This chain is Molybdate-anion transporter (mfsd5), found in Xenopus laevis (African clawed frog).